The sequence spans 210 residues: Probable GTP-binding protein EngB (210 aa).

The 175-residue stretch at 25–199 folds into the EngB-type G domain; it reads TGIEVAFAGR…RQKLDTWFNE (175 aa). GTP-binding positions include 33-40, 60-64, 78-81, 145-148, and 178-180; these read GRSNAGKS, GRTQL, DLPG, TKAD, and FSS. The Mg(2+) site is built by S40 and T62.

Belongs to the TRAFAC class TrmE-Era-EngA-EngB-Septin-like GTPase superfamily. EngB GTPase family. Mg(2+) serves as cofactor.

Its function is as follows. Necessary for normal cell division and for the maintenance of normal septation. The protein is Probable GTP-binding protein EngB of Escherichia coli O157:H7.